A 701-amino-acid chain; its full sequence is Elongation factor G 1 (701 aa).

A tr-type G domain is found at 5–281 (SKYRNIGIFA…AVVDYLPSPT (277 aa)). GTP-binding positions include 14 to 21 (AHVDAGKT), 78 to 82 (DTPGH), and 132 to 135 (NKLD).

It belongs to the TRAFAC class translation factor GTPase superfamily. Classic translation factor GTPase family. EF-G/EF-2 subfamily.

It is found in the cytoplasm. In terms of biological role, catalyzes the GTP-dependent ribosomal translocation step during translation elongation. During this step, the ribosome changes from the pre-translocational (PRE) to the post-translocational (POST) state as the newly formed A-site-bound peptidyl-tRNA and P-site-bound deacylated tRNA move to the P and E sites, respectively. Catalyzes the coordinated movement of the two tRNA molecules, the mRNA and conformational changes in the ribosome. This is Elongation factor G 1 from Colwellia psychrerythraea (strain 34H / ATCC BAA-681) (Vibrio psychroerythus).